We begin with the raw amino-acid sequence, 261 residues long: uncharacterized protein (261 aa).

A signal peptide spans 1 to 22 (MIHSKKLTLGICLVLLIILIGG). Cysteine 23 carries the N-palmitoyl cysteine lipid modification. The S-diacylglycerol cysteine moiety is linked to residue cysteine 23.

Belongs to the staphylococcal tandem lipoprotein family.

The protein localises to the cell membrane. This is an uncharacterized protein from Staphylococcus aureus (strain NCTC 8325 / PS 47).